Reading from the N-terminus, the 92-residue chain is Large ribosomal subunit protein eL31 (92 aa).

It belongs to the eukaryotic ribosomal protein eL31 family.

The polypeptide is Large ribosomal subunit protein eL31 (Halorubrum lacusprofundi (strain ATCC 49239 / DSM 5036 / JCM 8891 / ACAM 34)).